A 191-amino-acid chain; its full sequence is Cilia- and flagella-associated protein 20 (191 aa).

The protein belongs to the CFAP20 family.

Its subcellular location is the cytoplasm. The protein resides in the cytoskeleton. It localises to the cilium basal body. It is found in the cell projection. The protein localises to the cilium. Its subcellular location is the cilium axoneme. Cilium- and flagellum-specific protein required for axonemal structure organization and motility. Microtubule inner protein (MIP) part of the dynein-decorated doublet microtubules (DMTs) in cilia axoneme, which is required for motile cilia beating. May also play a role in cortical organization of basal body. The protein is Cilia- and flagella-associated protein 20 (CFAP20) of Paramecium tetraurelia.